The primary structure comprises 551 residues: Solute carrier family 22 member 6 (551 aa).

Topologically, residues 1–23 (MAFNDLLKQVGGVGRFQRIQVTL) are cytoplasmic. Residues 24 to 44 (VVLPLLLMASHNTLQNFTAAI) traverse the membrane as a helical segment. Residues 45–135 (PPHHCRPPAH…LVCSHRALRQ (91 aa)) are Extracellular-facing. N-linked (GlcNAc...) asparagine glycans are attached at residues asparagine 56, asparagine 92, and asparagine 113. A helical transmembrane segment spans residues 136-156 (LGQSLYMAGVLIGAMVFGYLA). The Cytoplasmic segment spans residues 157–164 (DRLGRRKV). The chain crosses the membrane as a helical span at residues 165–187 (LILNYLQTAVSGTCAAFSPNFTV). Over 188-195 (YCTFRLLS) the chain is Extracellular. A helical transmembrane segment spans residues 196–216 (GMSLAGIALNCMTLNVEWMPI). The Cytoplasmic segment spans residues 217–224 (HTRAYVGT). The chain crosses the membrane as a helical span at residues 225–245 (LAGYVYSTGQFLLAGVAYAVP). Over 246-248 (HWR) the chain is Extracellular. The chain crosses the membrane as a helical span at residues 249 to 269 (YLQLLVSVPFFAFFVYSWFFI). Residues 270 to 337 (ESARWYSTPG…ELLRCPALRH (68 aa)) lie on the Cytoplasmic side of the membrane. A helical membrane pass occupies residues 338 to 358 (LFLCLSLLWFATSFAYYGLVM). The Extracellular portion of the chain corresponds to 359 to 368 (DLQGFGVSIY). The chain crosses the membrane as a helical span at residues 369 to 389 (LIQVIFGAVDLPAKLVCFLVI). Residues 390–395 (NSLGRR) lie on the Cytoplasmic side of the membrane. A helical membrane pass occupies residues 396–416 (PAQMASLLLAGICILVNGVIP). Residues 417 to 425 (RDQSIVRTS) are Extracellular-facing. Residues 426-446 (LAVLGKGCLASSFNCIFLYTG) form a helical membrane-spanning segment. The Cytoplasmic segment spans residues 447–484 (ELYPTMIRQTGLGMGSTMARVGSIVSPLVSMTSELYPS). A helical transmembrane segment spans residues 485–505 (LPLFIYGAVPVAASAATALLP). Residues 506 to 551 (ETLGQPLPDTVQDLESRRRGKPRRQQQEQQKQMVPLQASVQEKNGL) lie on the Extracellular side of the membrane. The segment at 520-551 (ESRRRGKPRRQQQEQQKQMVPLQASVQEKNGL) is disordered.

Belongs to the major facilitator (TC 2.A.1) superfamily. Organic cation transporter (TC 2.A.1.19) family. In terms of processing, glycosylated. Glycosylation is necessary for proper targeting of the transporter to the plasma membrane.

It is found in the basolateral cell membrane. Its subcellular location is the basal cell membrane. The enzyme catalyses (6R)-L-erythro-5,6,7,8-tetrahydrobiopterin(out) + a dicarboxylate(in) = (6R)-L-erythro-5,6,7,8-tetrahydrobiopterin(in) + a dicarboxylate(out). The catalysed reaction is L-erythro-7,8-dihydrobiopterin(out) + a dicarboxylate(in) = L-erythro-7,8-dihydrobiopterin(in) + a dicarboxylate(out). It catalyses the reaction L-sepiapterin(out) + a dicarboxylate(in) = L-sepiapterin(in) + a dicarboxylate(out). It carries out the reaction prostaglandin F2alpha(out) + a dicarboxylate(in) = prostaglandin F2alpha(in) + a dicarboxylate(out). The enzyme catalyses prostaglandin E2(out) + a dicarboxylate(in) = prostaglandin E2(in) + a dicarboxylate(out). The catalysed reaction is 3',5'-cyclic AMP(out) + a dicarboxylate(in) = 3',5'-cyclic AMP(in) + a dicarboxylate(out). It catalyses the reaction 3',5'-cyclic GMP(out) + a dicarboxylate(in) = 3',5'-cyclic GMP(in) + a dicarboxylate(out). It carries out the reaction urate(out) + a dicarboxylate(in) = urate(in) + a dicarboxylate(out). The enzyme catalyses kynurenate(out) + glutarate(in) = kynurenate(in) + glutarate(out). The catalysed reaction is (indol-3-yl)acetate(out) + a dicarboxylate(in) = (indol-3-yl)acetate(in) + a dicarboxylate(out). It catalyses the reaction indoxyl sulfate(out) + a dicarboxylate(in) = indoxyl sulfate(in) + a dicarboxylate(out). It carries out the reaction N-benzoylglycine(out) + a dicarboxylate(in) = N-benzoylglycine(in) + a dicarboxylate(out). The enzyme catalyses 3-carboxy-4-methyl-5-propyl-2-furanpropanoate(out) + a dicarboxylate(in) = 3-carboxy-4-methyl-5-propyl-2-furanpropanoate(in) + a dicarboxylate(out). In terms of biological role, secondary active transporter that functions as a Na(+)-independent organic anion (OA)/dicarboxylate antiporter where the uptake of one molecule of OA into the cell is coupled with an efflux of one molecule of intracellular dicarboxylate such as 2-oxoglutarate or glutarate. Mediates the uptake of OA across the basolateral side of proximal tubule epithelial cells, thereby contributing to the renal elimination of endogenous OA from the systemic circulation into the urine. Functions as a biopterin transporters involved in the uptake and the secretion of coenzymes tetrahydrobiopterin (BH4), dihydrobiopterin (BH2) and sepiapterin to urine, thereby determining baseline levels of blood biopterins. Transports prostaglandin E2 (PGE2) and prostaglandin F2-alpha (PGF2-alpha) and may contribute to their renal excretion. Also mediates the uptake of cyclic nucleotides such as cAMP and cGMP. Involved in the transport of neuroactive tryptophan metabolites kynurenate (KYNA) and xanthurenate (XA) and may contribute to their secretion from the brain. May transport glutamate. Also involved in the disposition of uremic toxins and potentially toxic xenobiotics by the renal organic anion secretory pathway, helping reduce their undesired toxicological effects on the body. Uremic toxins include the indoxyl sulfate (IS), hippurate/N-benzoylglycine (HA), indole acetate (IA), 3-carboxy-4- methyl-5-propyl-2-furanpropionate (CMPF) and urate. Xenobiotics include the mycotoxin ochratoxin (OTA). May also contribute to the transport of organic compounds in testes across the blood-testis-barrier. May also work as a bidirectional OA/dicarboxylate exchanger. The sequence is that of Solute carrier family 22 member 6 from Oryctolagus cuniculus (Rabbit).